Reading from the N-terminus, the 225-residue chain is Glucose-induced degradation protein 8 homolog (225 aa).

In terms of domain architecture, LisH spans 22–54 (QRAEMNRLIMDYLVTEGYKEAAEKFRIESGTQP). The CTLH domain occupies 60–117 (SLDDRIKIREAVQKGDLEQAVSMTNKLNPDILDSNQQLYFHLQQQRLIELIREKDIEA).

Belongs to the GID8 family.

Its subcellular location is the cytoplasm. It is found in the nucleus. Functionally, core component of the CTLH E3 ubiquitin-protein ligase complex that mediates ubiquitination and subsequent proteasomal degradation of target proteins. Acts as a positive regulator of Wnt signaling pathway by promoting beta-catenin (CTNNB1) nuclear accumulation. The protein is Glucose-induced degradation protein 8 homolog of Nematostella vectensis (Starlet sea anemone).